Consider the following 177-residue polypeptide: Large ribosomal subunit protein uL6 (177 aa).

It belongs to the universal ribosomal protein uL6 family. Part of the 50S ribosomal subunit.

In terms of biological role, this protein binds to the 23S rRNA, and is important in its secondary structure. It is located near the subunit interface in the base of the L7/L12 stalk, and near the tRNA binding site of the peptidyltransferase center. The chain is Large ribosomal subunit protein uL6 from Salmonella newport (strain SL254).